The primary structure comprises 185 residues: Peptide deformylase (185 aa).

Positions 98 and 140 each coordinate Fe cation. Glutamate 141 is a catalytic residue. Histidine 144 contacts Fe cation.

The protein belongs to the polypeptide deformylase family. The cofactor is Fe(2+).

The enzyme catalyses N-terminal N-formyl-L-methionyl-[peptide] + H2O = N-terminal L-methionyl-[peptide] + formate. Its function is as follows. Removes the formyl group from the N-terminal Met of newly synthesized proteins. Requires at least a dipeptide for an efficient rate of reaction. N-terminal L-methionine is a prerequisite for activity but the enzyme has broad specificity at other positions. The protein is Peptide deformylase of Parabacteroides distasonis (strain ATCC 8503 / DSM 20701 / CIP 104284 / JCM 5825 / NCTC 11152).